The primary structure comprises 103 residues: Secreted Ly-6/uPAR-related protein 1 (103 aa).

Residues 1-22 (MASRWAVQLLLVAAWSMGCGEA) form the signal peptide. The 50-residue stretch at 24-73 (KCYTCKEPMTSASCRTITRCKPEDTACMTTLVTVEAEYPFNQSPVVTRSC) folds into the UPAR/Ly6 domain. Disulfide bonds link Cys25/Cys50, Cys28/Cys37, Cys43/Cys73, Cys77/Cys93, and Cys94/Cys99.

In terms of assembly, homodimer. Interacts with PLAU. Interacts with CHRNA7. As to expression, granulocytes. Expressed in skin. Predominantly expressed in the granular layer of skin, notably the acrosyringium. Identified in several biological fluids such as sweat, saliva, tears, plasma and urine.

It is found in the secreted. Its function is as follows. Has an antitumor activity. Was found to be a marker of late differentiation of the skin. Implicated in maintaining the physiological and structural integrity of the keratinocyte layers of the skin. In vitro down-regulates keratinocyte proliferation; the function may involve the proposed role as modulator of nicotinic acetylcholine receptors (nAChRs) activity. In vitro inhibits alpha-7-dependent nAChR currents in an allosteric manner. In T cells may be involved in regulation of intracellular Ca(2+) signaling. Seems to have an immunomodulatory function in the cornea. The function may implicate a possible role as a scavenger receptor for PLAU thereby blocking PLAU-dependent functions of PLAUR such as in cell migration and proliferation. The chain is Secreted Ly-6/uPAR-related protein 1 (SLURP1) from Homo sapiens (Human).